Reading from the N-terminus, the 219-residue chain is Rho-related protein racN (219 aa).

12–19 (GDVTIGKT) contacts GTP. The Effector region signature appears at 33 to 41 (YIPTIFDNH). GTP contacts are provided by residues 58–62 (DTGGG) and 114–117 (TKTD). Position 216 is a cysteine methyl ester (Cys216). Cys216 carries the S-geranylgeranyl cysteine lipid modification. A propeptide spans 217–219 (IIC) (removed in mature form).

It belongs to the small GTPase superfamily. Rho family.

Its subcellular location is the cell membrane. This is Rho-related protein racN (racN) from Dictyostelium discoideum (Social amoeba).